Here is a 558-residue protein sequence, read N- to C-terminus: Ankyrin repeat protein OPG189 (558 aa).

ANK repeat units lie at residues 65-95 (YGEN…NINK), 169-205 (YGCT…DVDK), 209-239 (YGNT…NIDS), 243-272 (NRYT…NVNA), 276-304 (FGTT…ELEI), 339-368 (YNET…DFET), and 372-401 (SGCT…SLKI).

This sequence belongs to the orthopoxvirus OPG189 protein family.

Functionally, contributes to viral release without involving rearrangement of host actin. This chain is Ankyrin repeat protein OPG189 (OPG189), found in Vaccinia virus (strain Western Reserve) (VACV).